Consider the following 209-residue polypeptide: Large ribosomal subunit protein uL1 (209 aa).

Belongs to the universal ribosomal protein uL1 family. Part of the 50S ribosomal subunit.

Its function is as follows. Binds directly to 23S rRNA. The L1 stalk is quite mobile in the ribosome, and is involved in E site tRNA release. Protein L1 is also a translational repressor protein, it controls the translation of the L11 operon by binding to its mRNA. This Neorickettsia sennetsu (strain ATCC VR-367 / Miyayama) (Ehrlichia sennetsu) protein is Large ribosomal subunit protein uL1 (rplA).